Here is a 157-residue protein sequence, read N- to C-terminus: Transcription factor HES-2 (157 aa).

The region spanning Leu-13–Gln-70 is the bHLH domain. The Orange domain occupies Tyr-86 to Leu-119. The tract at residues Val-124–Trp-157 is disordered. Over residues Thr-132 to Gly-149 the composition is skewed to pro residues. The WRPW motif motif lies at Trp-154–Trp-157.

In terms of assembly, transcription repression requires formation of a complex with a corepressor protein of the Groucho/TLE family.

The protein resides in the nucleus. Its function is as follows. Transcriptional repressor of genes that require a bHLH protein for their transcription. This chain is Transcription factor HES-2 (Hes2), found in Mus musculus (Mouse).